Here is a 614-residue protein sequence, read N- to C-terminus: MAHSGNGESFHDPLRGFIQRNCFRWNNQKLILQCFMALAFVGITSSTTQPDIEGGALLQLRDSLNDSSNRLKWTRDFVSPCYSWSYVTCRGQSVVALNLASSGFTGTLSPAITKLKFLVTLELQNNSLSGALPDSLGNMVNLQTLNLSVNSFSGSIPASWSQLSNLKHLDLSSNNLTGSIPTQFFSIPTFDFSGTQLICGKSLNQPCSSSSRLPVTSSKKKLRDITLTASCVASIILFLGAMVMYHHHRVRRTKYDIFFDVAGEDDRKISFGQLKRFSLREIQLATDSFNESNLIGQGGFGKVYRGLLPDKTKVAVKRLADYFSPGGEAAFQREIQLISVAVHKNLLRLIGFCTTSSERILVYPYMENLSVAYRLRDLKAGEEGLDWPTRKRVAFGSAHGLEYLHEHCNPKIIHRDLKAANILLDNNFEPVLGDFGLAKLVDTSLTHVTTQVRGTMGHIAPEYLCTGKSSEKTDVFGYGITLLELVTGQRAIDFSRLEEEENILLLDHIKKLLREQRLRDIVDSNLTTYDSKEVETIVQVALLCTQGSPEDRPAMSEVVKMLQGTGGLAEKWTEWEQLEEVRNKEALLLPTLPATWDEEETTVDQESIRLSTAR.

The N-terminal stretch at 1-50 (MAHSGNGESFHDPLRGFIQRNCFRWNNQKLILQCFMALAFVGITSSTTQP) is a signal peptide. The Extracellular portion of the chain corresponds to 51-224 (DIEGGALLQL…VTSSKKKLRD (174 aa)). N-linked (GlcNAc...) asparagine glycosylation is found at Asn65, Asn125, Asn146, and Asn175. 3 LRR repeats span residues 115 to 139 (LKFLVTLELQNNSLSGALPDSLGNM), 141 to 163 (NLQTLNLSVNSFSGSIPASWSQL), and 164 to 187 (SNLKHLDLSSNNLTGSIPTQFFSI). Residues 225–245 (ITLTASCVASIILFLGAMVMY) traverse the membrane as a helical segment. The Cytoplasmic segment spans residues 246-613 (HHHRVRRTKY…DQESIRLSTA (368 aa)). Thr286 carries the phosphothreonine modification. The region spanning 289 to 573 (FNESNLIGQG…GTGGLAEKWT (285 aa)) is the Protein kinase domain. 295–303 (IGQGGFGKV) lines the ATP pocket. Thr312 is modified (phosphothreonine). Residue Lys317 participates in ATP binding. Ser370 carries the phosphoserine modification. Thr389 carries the phosphothreonine modification. Asp416 (proton acceptor) is an active-site residue. Phosphothreonine occurs at positions 449, 450, and 455. The residue at position 463 (Tyr463) is a Phosphotyrosine. Thr466 is subject to Phosphothreonine. Residue Ser470 is modified to Phosphoserine. Position 545 is a phosphothreonine (Thr545).

This sequence belongs to the protein kinase superfamily. Ser/Thr protein kinase family.

It localises to the cell membrane. It carries out the reaction L-seryl-[protein] + ATP = O-phospho-L-seryl-[protein] + ADP + H(+). The catalysed reaction is L-threonyl-[protein] + ATP = O-phospho-L-threonyl-[protein] + ADP + H(+). This Arabidopsis thaliana (Mouse-ear cress) protein is Probable LRR receptor-like serine/threonine-protein kinase At5g63710.